The chain runs to 131 residues: Structural protein ORF131 (131 aa).

It belongs to the viral ORF131/RIP family.

The protein localises to the virion. The protein is Structural protein ORF131 of Acidianus convivator (ATV).